Consider the following 265-residue polypeptide: Hydroxyethylthiazole kinase 2 (265 aa).

Residue Met-39 coordinates substrate. Lys-115 and Thr-168 together coordinate ATP. A substrate-binding site is contributed by Gly-195.

It belongs to the Thz kinase family. The cofactor is Mg(2+).

It catalyses the reaction 5-(2-hydroxyethyl)-4-methylthiazole + ATP = 4-methyl-5-(2-phosphooxyethyl)-thiazole + ADP + H(+). It functions in the pathway cofactor biosynthesis; thiamine diphosphate biosynthesis; 4-methyl-5-(2-phosphoethyl)-thiazole from 5-(2-hydroxyethyl)-4-methylthiazole: step 1/1. Catalyzes the phosphorylation of the hydroxyl group of 4-methyl-5-beta-hydroxyethylthiazole (THZ). This chain is Hydroxyethylthiazole kinase 2, found in Clostridium botulinum (strain ATCC 19397 / Type A).